The following is a 241-amino-acid chain: Ribosomal RNA small subunit methyltransferase J (241 aa).

S-adenosyl-L-methionine-binding positions include 94–95 and aspartate 163; that span reads RD.

Belongs to the methyltransferase superfamily. RsmJ family.

It localises to the cytoplasm. The enzyme catalyses guanosine(1516) in 16S rRNA + S-adenosyl-L-methionine = N(2)-methylguanosine(1516) in 16S rRNA + S-adenosyl-L-homocysteine + H(+). Specifically methylates the guanosine in position 1516 of 16S rRNA. The polypeptide is Ribosomal RNA small subunit methyltransferase J (Francisella tularensis subsp. tularensis (strain FSC 198)).